The chain runs to 592 residues: Aspartate--tRNA ligase (592 aa).

Glutamate 176 is an L-aspartate binding site. The segment at 200–203 (QIFK) is aspartate. Arginine 222 serves as a coordination point for L-aspartate. ATP-binding positions include 222-224 (RDE) and glutamine 231. Residue histidine 450 participates in L-aspartate binding. Glutamate 484 contacts ATP. Arginine 491 is a binding site for L-aspartate. Residue 536–539 (GLDR) participates in ATP binding.

The protein belongs to the class-II aminoacyl-tRNA synthetase family. Type 1 subfamily. Homodimer.

The protein resides in the cytoplasm. It catalyses the reaction tRNA(Asp) + L-aspartate + ATP = L-aspartyl-tRNA(Asp) + AMP + diphosphate. In terms of biological role, catalyzes the attachment of L-aspartate to tRNA(Asp) in a two-step reaction: L-aspartate is first activated by ATP to form Asp-AMP and then transferred to the acceptor end of tRNA(Asp). The sequence is that of Aspartate--tRNA ligase from Macrococcus caseolyticus (strain JCSC5402) (Macrococcoides caseolyticum).